The following is a 465-amino-acid chain: Ran-binding protein 3-like (465 aa).

Residues 276–417 form the RanBD1 domain; sequence SQPSRKCLLE…ALQSFNKQRD (142 aa).

Interacts with SMAD1, SMAD5 and SMAD8; the interaction (with SMAD at least) increases when SMAD1 is not phosphorylated and mediates SMAD1 nuclear export.

Its subcellular location is the nucleus. The protein resides in the cytoplasm. Functionally, nuclear export factor for BMP-specific SMAD1/5/8 that plays a critical role in terminating BMP signaling and regulating mesenchymal stem cell differentiation by blocking osteoblast differentiation to promote myogenic differention. Directly recognizes dephosphorylated SMAD1/5/8 and mediates their nuclear export in a Ran-dependent manner. This is Ran-binding protein 3-like (RANBP3L) from Homo sapiens (Human).